The primary structure comprises 329 residues: Protein Brevis radix-like 4 (329 aa).

The interval 12 to 37 (SGTSRHHGQQRRGGSPPPRGRTTSVY) is disordered. Residues 86–142 (REWVAQVEPGVQITFVSLAGGGGNDLKRIRFSREMYDKWQAQKWWGENNERIMELYN) form the BRX 1 domain. A disordered region spans residues 151 to 263 (LPTPPRSDDG…TTSCSSRDEV (113 aa)). Composition is skewed to low complexity over residues 222 to 236 (SNPS…QQPQ) and 243 to 252 (AAASDAMDAA). Polar residues predominate over residues 253-263 (RTTSCSSRDEV). The BRX 2 domain occupies 274–329 (TEWVIQDEPGVYITVRELADGTRELRRVRFSRERFAELNAKLWWEENKERIQAQYL).

It belongs to the BRX family.

Its subcellular location is the nucleus. This is Protein Brevis radix-like 4 (BRXL4) from Oryza sativa subsp. japonica (Rice).